Reading from the N-terminus, the 383-residue chain is Acetylornithine deacetylase (383 aa).

Position 80 (His80) interacts with Zn(2+). The active site involves Asp82. Zn(2+) is bound at residue Asp112. Glu144 is a catalytic residue. Residues Glu145, Glu169, and His355 each contribute to the Zn(2+) site.

It belongs to the peptidase M20A family. ArgE subfamily. In terms of assembly, homodimer. Zn(2+) is required as a cofactor. Co(2+) serves as cofactor. The cofactor is glutathione.

Its subcellular location is the cytoplasm. It catalyses the reaction N(2)-acetyl-L-ornithine + H2O = L-ornithine + acetate. The protein operates within amino-acid biosynthesis; L-arginine biosynthesis; L-ornithine from N(2)-acetyl-L-ornithine (linear): step 1/1. Its function is as follows. Catalyzes the hydrolysis of the amide bond of N(2)-acetylated L-amino acids. Cleaves the acetyl group from N-acetyl-L-ornithine to form L-ornithine, an intermediate in L-arginine biosynthesis pathway, and a branchpoint in the synthesis of polyamines. The polypeptide is Acetylornithine deacetylase (Erwinia tasmaniensis (strain DSM 17950 / CFBP 7177 / CIP 109463 / NCPPB 4357 / Et1/99)).